The sequence spans 336 residues: L-Ala-D/L-amino acid epimerase (336 aa).

Substrate-binding positions include Thr-130 and 152–154 (KIK). Mg(2+) contacts are provided by Asp-178, Glu-204, and Asp-229. Substrate is bound by residues Lys-251 and 301-303 (DMD).

It belongs to the mandelate racemase/muconate lactonizing enzyme family. Mg(2+) is required as a cofactor.

Catalyzes the epimerization of D-Ala-D-Ala to D-Ala-L-Ala. Has broad substrate specificity and catalyzes the epimerization of a variety of dipeptides containing an N-terminal Ala followed by Ser, Thr, Val, Met, His, Phe or Trp (in vitro). In Flavobacterium johnsoniae (strain ATCC 17061 / DSM 2064 / JCM 8514 / BCRC 14874 / CCUG 350202 / NBRC 14942 / NCIMB 11054 / UW101) (Cytophaga johnsonae), this protein is L-Ala-D/L-amino acid epimerase.